The following is a 285-amino-acid chain: Nucleotide-binding protein PFLU_0879 (285 aa).

8 to 15 (GRSGSGKS) provides a ligand contact to ATP. 60–63 (DARN) is a binding site for GTP.

Belongs to the RapZ-like family.

Its function is as follows. Displays ATPase and GTPase activities. This Pseudomonas fluorescens (strain SBW25) protein is Nucleotide-binding protein PFLU_0879.